The following is a 267-amino-acid chain: Octanoyltransferase (267 aa).

Positions 77-265 (GTASELVWLV…AFESVFGPRQ (189 aa)) constitute a BPL/LPL catalytic domain. Residues 116-123 (RGGEYTYH), 196-198 (AIG), and 209-211 (GIA) contribute to the substrate site. Catalysis depends on Cys-227, which acts as the Acyl-thioester intermediate.

The protein belongs to the LipB family.

The protein localises to the cytoplasm. It carries out the reaction octanoyl-[ACP] + L-lysyl-[protein] = N(6)-octanoyl-L-lysyl-[protein] + holo-[ACP] + H(+). It functions in the pathway protein modification; protein lipoylation via endogenous pathway; protein N(6)-(lipoyl)lysine from octanoyl-[acyl-carrier-protein]: step 1/2. Its function is as follows. Catalyzes the transfer of endogenously produced octanoic acid from octanoyl-acyl-carrier-protein onto the lipoyl domains of lipoate-dependent enzymes. Lipoyl-ACP can also act as a substrate although octanoyl-ACP is likely to be the physiological substrate. The protein is Octanoyltransferase of Brucella suis biovar 1 (strain 1330).